A 188-amino-acid polypeptide reads, in one-letter code: ATP synthase subunit b (188 aa).

Residues 7 to 26 (TAAAGAMTLFFASMAYASGD) traverse the membrane as a helical segment.

Belongs to the ATPase B chain family. F-type ATPases have 2 components, F(1) - the catalytic core - and F(0) - the membrane proton channel. F(1) has five subunits: alpha(3), beta(3), gamma(1), delta(1), epsilon(1). F(0) has three main subunits: a(1), b(2) and c(10-14). The alpha and beta chains form an alternating ring which encloses part of the gamma chain. F(1) is attached to F(0) by a central stalk formed by the gamma and epsilon chains, while a peripheral stalk is formed by the delta and b chains.

It localises to the cell inner membrane. In terms of biological role, f(1)F(0) ATP synthase produces ATP from ADP in the presence of a proton or sodium gradient. F-type ATPases consist of two structural domains, F(1) containing the extramembraneous catalytic core and F(0) containing the membrane proton channel, linked together by a central stalk and a peripheral stalk. During catalysis, ATP synthesis in the catalytic domain of F(1) is coupled via a rotary mechanism of the central stalk subunits to proton translocation. Its function is as follows. Component of the F(0) channel, it forms part of the peripheral stalk, linking F(1) to F(0). This Nitratidesulfovibrio vulgaris (strain DP4) (Desulfovibrio vulgaris) protein is ATP synthase subunit b.